The following is a 360-amino-acid chain: Diacylglycerol O-acyltransferase 3 (360 aa).

The tract at residues 153-182 is disordered; the sequence is KAKAMKKMTEMDSESSSSSESSDSDCDKGK. [2Fe-2S] cluster is bound by residues C265, C270, C298, and C302.

The protein belongs to the diacylglycerol acyltransferase family. Requires [2Fe-2S] cluster as cofactor.

The enzyme catalyses an acyl-CoA + a 1,2-diacyl-sn-glycerol = a triacyl-sn-glycerol + CoA. Its pathway is glycerolipid metabolism; triacylglycerol biosynthesis. Functionally, involved in triacylglycerol (TAG) biosynthesis. Catalyzes the acylation of the sn-3 hydroxy group of sn-1,2-diacylglycerol using acyl-CoA. May preferentially use linolenoyl-CoA as substrate and to a lesser extent linoleoyl-CoA. May contribute to the active recycling of linoleate and linolenate into TAG when seed oil breakdown is blocked. This chain is Diacylglycerol O-acyltransferase 3, found in Arabidopsis thaliana (Mouse-ear cress).